The following is a 385-amino-acid chain: 8-amino-7-oxononanoate synthase (385 aa).

R23 is a binding site for substrate. 110–111 serves as a coordination point for pyridoxal 5'-phosphate; that stretch reads GF. H135 is a substrate binding site. Pyridoxal 5'-phosphate contacts are provided by S180, H208, and T234. K237 bears the N6-(pyridoxal phosphate)lysine mark. T350 contributes to the substrate binding site.

It belongs to the class-II pyridoxal-phosphate-dependent aminotransferase family. BioF subfamily. In terms of assembly, homodimer. Pyridoxal 5'-phosphate serves as cofactor.

The enzyme catalyses 6-carboxyhexanoyl-[ACP] + L-alanine + H(+) = (8S)-8-amino-7-oxononanoate + holo-[ACP] + CO2. The protein operates within cofactor biosynthesis; biotin biosynthesis. Catalyzes the decarboxylative condensation of pimeloyl-[acyl-carrier protein] and L-alanine to produce 8-amino-7-oxononanoate (AON), [acyl-carrier protein], and carbon dioxide. The sequence is that of 8-amino-7-oxononanoate synthase from Vibrio vulnificus (strain YJ016).